We begin with the raw amino-acid sequence, 430 residues long: Enolase (430 aa).

Gln-165 is a binding site for (2R)-2-phosphoglycerate. Glu-207 acts as the Proton donor in catalysis. Mg(2+) is bound by residues Asp-244, Glu-287, and Asp-314. Positions 339, 368, 369, and 390 each coordinate (2R)-2-phosphoglycerate. Lys-339 functions as the Proton acceptor in the catalytic mechanism.

The protein belongs to the enolase family. As to quaternary structure, component of the RNA degradosome, a multiprotein complex involved in RNA processing and mRNA degradation. Mg(2+) is required as a cofactor.

The protein localises to the cytoplasm. Its subcellular location is the secreted. The protein resides in the cell surface. It catalyses the reaction (2R)-2-phosphoglycerate = phosphoenolpyruvate + H2O. It participates in carbohydrate degradation; glycolysis; pyruvate from D-glyceraldehyde 3-phosphate: step 4/5. Functionally, catalyzes the reversible conversion of 2-phosphoglycerate (2-PG) into phosphoenolpyruvate (PEP). It is essential for the degradation of carbohydrates via glycolysis. This is Enolase from Xylella fastidiosa (strain M23).